Reading from the N-terminus, the 240-residue chain is Myomodulin neuropeptides 2 (240 aa).

The N-terminal stretch at 1 to 23 is a signal peptide; sequence MWKILETCSCFLVVAVLSGLGKA. Residues 23–44 are disordered; that stretch reads AQPESFSGSAVTDDSTSGANKR. A propeptide spanning residues 24-44 is cleaved from the precursor; the sequence is QPESFSGSAVTDDSTSGANKR. Residues 26–41 show a composition bias toward polar residues; it reads ESFSGSAVTDDSTSGA. Residues L51 and L60 each carry the leucine amide modification. Propeptides (connecting peptide) lie at residues 72-81 and 84-112; these read SGHQVPMLRA and GSPD…RDQS. A81 carries the alanine amide modification. Pyrrolidone carboxylic acid is present on Q115. Y121 carries the tyrosine amide modification. Propeptides (connecting peptide) lie at residues 124 to 147, 124 to 148, 124 to 149, 124 to 168, 131 to 168, 149 to 168, 150 to 168, 151 to 168, 171 to 190, and 171 to 199; these read DNNG…SNFD, DNNG…NFDL, DNNG…FDLL, DNNG…GGRY, DLLD…GGRY, LSSL…GGRY, SSLN…GGRY, SLNN…GGRY, SLPD…LVQS, and SLPD…PYSS. The residue at position 207 (I207) is an Isoleucine amide. Residues 210–219 constitute a propeptide that is removed on maturation; sequence FSGSPRLQAK. Positions 212-240 are disordered; sequence GSPRLQAKAVPRPRIGRQESQMREAKSAE. An Isoleucine amide modification is found at I226. Positions 227-240 are excised as a propeptide; it reads GRQESQMREAKSAE. The span at 227–240 shows a compositional bias: basic and acidic residues; that stretch reads GRQESQMREAKSAE.

Expressed in the pedal-buccal projection neurons in the pedal ganglion.

It localises to the secreted. In terms of biological role, MMG2-DPs (Myomodulin gene 2-derived peptides) bias egestive feeding programs toward ingestive ones, and modulate accessory radula closer (ARC) muscle contractions. This is Myomodulin neuropeptides 2 (MMG2) from Aplysia californica (California sea hare).